Reading from the N-terminus, the 441-residue chain is Homogentisate 1,2-dioxygenase (441 aa).

Histidine 297 functions as the Proton acceptor in the catalytic mechanism. Residues histidine 340 and glutamate 346 each coordinate Fe cation. Homogentisate-binding residues include tyrosine 355 and histidine 376. Histidine 376 serves as a coordination point for Fe cation.

It belongs to the homogentisate dioxygenase family. Hexamer; dimer of trimers. It depends on Fe cation as a cofactor.

It carries out the reaction homogentisate + O2 = 4-maleylacetoacetate + H(+). It participates in amino-acid degradation; L-phenylalanine degradation; acetoacetate and fumarate from L-phenylalanine: step 4/6. Functionally, involved in the catabolism of homogentisate (2,5-dihydroxyphenylacetate or 2,5-OH-PhAc), a central intermediate in the degradation of phenylalanine and tyrosine. Catalyzes the oxidative ring cleavage of the aromatic ring of homogentisate to yield maleylacetoacetate. This is Homogentisate 1,2-dioxygenase from Streptomyces coelicolor (strain ATCC BAA-471 / A3(2) / M145).